The chain runs to 609 residues: Meiotically up-regulated gene 28 protein (609 aa).

2 consecutive RRM domains span residues 20–103 and 419–499; these read ISIY…YTHI and CNLF…YAEK.

Its subcellular location is the cytoplasm. Has a role in sporulation. This chain is Meiotically up-regulated gene 28 protein (mug28), found in Schizosaccharomyces pombe (strain 972 / ATCC 24843) (Fission yeast).